The chain runs to 286 residues: Bifunctional protein FolD (286 aa).

Residues 166–168 (GQS), Ser-191, and Ile-232 contribute to the NADP(+) site.

The protein belongs to the tetrahydrofolate dehydrogenase/cyclohydrolase family. In terms of assembly, homodimer.

The catalysed reaction is (6R)-5,10-methylene-5,6,7,8-tetrahydrofolate + NADP(+) = (6R)-5,10-methenyltetrahydrofolate + NADPH. It carries out the reaction (6R)-5,10-methenyltetrahydrofolate + H2O = (6R)-10-formyltetrahydrofolate + H(+). Its pathway is one-carbon metabolism; tetrahydrofolate interconversion. Functionally, catalyzes the oxidation of 5,10-methylenetetrahydrofolate to 5,10-methenyltetrahydrofolate and then the hydrolysis of 5,10-methenyltetrahydrofolate to 10-formyltetrahydrofolate. This is Bifunctional protein FolD from Alkalilimnicola ehrlichii (strain ATCC BAA-1101 / DSM 17681 / MLHE-1).